The primary structure comprises 513 residues: MFELPSGAEIQSIIATLKASVGFFIPEIYLSLLFMILIVVDLVVKGRKSTLLSVFSLVGLAGSLYFIYQQHAMQAGEFFFGMYVLDGFAIFFKYFFVLSGMLAVVITMADEQFEREISSMGEYYALVVAMVVGMMMMASSSDLLMIFLSMELVSFTAFILAGYFKSNMRSSEAALKYLIYGAVSSGLMIYGFSLIYGVTAQTNLIAISRELALHGADSFVMLFAALLVLAGFGYKIGAVPFHFWAPDVYEGSPTPVTAYLSVASKAAGFALLMRFVYVALPHTNNVQAATLGIDWFTLLVILAVASMIYGNVVALWQKNVKRLLAYSSIAHAGYALLGVIVMDKLGTQATLFYLLSYLLMNFGAFFVVVLIANRTGSESLDDYRGLGKSMPLAGAALTVFLISLVGLPPTIGFIGKLMVFSALIAKGSIFMWLALIGILTSVISLYYYMLIPLNMYLREPVQHASSNTGTQPRLVAQLFMGALMLLTIYFGLFFAPLSDFARYSASIFGLQLQ.

14 helical membrane-spanning segments follow: residues 20 to 40, 49 to 69, 88 to 108, 117 to 137, 144 to 164, 178 to 198, 219 to 239, 260 to 280, 295 to 315, 323 to 343, 351 to 371, 394 to 414, 429 to 451, and 474 to 494; these read SVGFFIPEIYLSLLFMILIVV, STLLSVFSLVGLAGSLYFIYQ, FAIFFKYFFVLSGMLAVVITM, ISSMGEYYALVVAMVVGMMMM, LMIFLSMELVSFTAFILAGYF, LIYGAVSSGLMIYGFSLIYGV, FVMLFAALLVLAGFGYKIGAV, LSVASKAAGFALLMRFVYVAL, WFTLLVILAVASMIYGNVVAL, LLAYSSIAHAGYALLGVIVMD, LFYLLSYLLMNFGAFFVVVLI, GAALTVFLISLVGLPPTIGFI, IFMWLALIGILTSVISLYYYMLI, and LVAQLFMGALMLLTIYFGLFF.

This sequence belongs to the complex I subunit 2 family. NDH-1 is composed of 14 different subunits. Subunits NuoA, H, J, K, L, M, N constitute the membrane sector of the complex.

It localises to the cell inner membrane. It catalyses the reaction a quinone + NADH + 5 H(+)(in) = a quinol + NAD(+) + 4 H(+)(out). Its function is as follows. NDH-1 shuttles electrons from NADH, via FMN and iron-sulfur (Fe-S) centers, to quinones in the respiratory chain. The immediate electron acceptor for the enzyme in this species is believed to be a menaquinone. Couples the redox reaction to proton translocation (for every two electrons transferred, four hydrogen ions are translocated across the cytoplasmic membrane), and thus conserves the redox energy in a proton gradient. This Chlorobium chlorochromatii (strain CaD3) protein is NADH-quinone oxidoreductase subunit N.